The sequence spans 136 residues: 1,4-dihydroxy-2-naphthoyl-CoA hydrolase (136 aa).

Glutamate 63 (nucleophile or proton acceptor) is an active-site residue. Residues glycine 82, 89-92, and 106-111 each bind substrate; these read HVRS and HLGSRH.

The protein belongs to the thioesterase PaaI family. In terms of assembly, homotetramer. Dimer of dimers.

The catalysed reaction is 1,4-dihydroxy-2-naphthoyl-CoA + H2O = 1,4-dihydroxy-2-naphthoate + CoA + H(+). Its pathway is quinol/quinone metabolism; 1,4-dihydroxy-2-naphthoate biosynthesis; 1,4-dihydroxy-2-naphthoate from chorismate: step 7/7. It participates in quinol/quinone metabolism; menaquinone biosynthesis. Its function is as follows. Catalyzes the hydrolysis of 1,4-dihydroxy-2-naphthoyl-CoA (DHNA-CoA) to 1,4-dihydroxy-2-naphthoate (DHNA). Also shows significant activity toward a wide range of acyl-CoA thioesters, and minimal activity toward benzoyl-holoEntB. The sequence is that of 1,4-dihydroxy-2-naphthoyl-CoA hydrolase from Escherichia coli (strain K12).